Here is a 614-residue protein sequence, read N- to C-terminus: Jacalin-related lectin 14 (614 aa).

Jacalin-type lectin domains lie at valine 27–tryptophan 169, proline 172–threonine 314, proline 317–proline 462, and alanine 468–proline 611.

Belongs to the jacalin lectin family.

This chain is Jacalin-related lectin 14 (JAL14), found in Arabidopsis thaliana (Mouse-ear cress).